A 690-amino-acid polypeptide reads, in one-letter code: Elongation factor G (690 aa).

In terms of domain architecture, tr-type G spans 8 to 283; sequence EDYRNFGIMA…AVVAYLPSPL (276 aa). GTP-binding positions include 17 to 24, 81 to 85, and 135 to 138; these read AHIDAGKT, DTPGH, and NKMD.

It belongs to the TRAFAC class translation factor GTPase superfamily. Classic translation factor GTPase family. EF-G/EF-2 subfamily.

Its subcellular location is the cytoplasm. In terms of biological role, catalyzes the GTP-dependent ribosomal translocation step during translation elongation. During this step, the ribosome changes from the pre-translocational (PRE) to the post-translocational (POST) state as the newly formed A-site-bound peptidyl-tRNA and P-site-bound deacylated tRNA move to the P and E sites, respectively. Catalyzes the coordinated movement of the two tRNA molecules, the mRNA and conformational changes in the ribosome. This is Elongation factor G from Nitrobacter winogradskyi (strain ATCC 25391 / DSM 10237 / CIP 104748 / NCIMB 11846 / Nb-255).